The sequence spans 342 residues: Holliday junction branch migration complex subunit RuvB (342 aa).

The interval 4–182 (TDRLLSAGRR…FGIPIRLQFY (179 aa)) is large ATPase domain (RuvB-L). Leucine 21, arginine 22, glycine 63, lysine 66, threonine 67, threonine 68, arginine 172, tyrosine 182, and arginine 219 together coordinate ATP. Threonine 67 contributes to the Mg(2+) binding site. A small ATPAse domain (RuvB-S) region spans residues 183-253 (TVEELERVVS…VADQSLNRLE (71 aa)). Residues 256–342 (NLGLDAMDRR…EAGQDGLFDV (87 aa)) are head domain (RuvB-H). The DNA site is built by arginine 292, arginine 311, and arginine 316.

It belongs to the RuvB family. In terms of assembly, homohexamer. Forms an RuvA(8)-RuvB(12)-Holliday junction (HJ) complex. HJ DNA is sandwiched between 2 RuvA tetramers; dsDNA enters through RuvA and exits via RuvB. An RuvB hexamer assembles on each DNA strand where it exits the tetramer. Each RuvB hexamer is contacted by two RuvA subunits (via domain III) on 2 adjacent RuvB subunits; this complex drives branch migration. In the full resolvosome a probable DNA-RuvA(4)-RuvB(12)-RuvC(2) complex forms which resolves the HJ.

The protein localises to the cytoplasm. It carries out the reaction ATP + H2O = ADP + phosphate + H(+). Functionally, the RuvA-RuvB-RuvC complex processes Holliday junction (HJ) DNA during genetic recombination and DNA repair, while the RuvA-RuvB complex plays an important role in the rescue of blocked DNA replication forks via replication fork reversal (RFR). RuvA specifically binds to HJ cruciform DNA, conferring on it an open structure. The RuvB hexamer acts as an ATP-dependent pump, pulling dsDNA into and through the RuvAB complex. RuvB forms 2 homohexamers on either side of HJ DNA bound by 1 or 2 RuvA tetramers; 4 subunits per hexamer contact DNA at a time. Coordinated motions by a converter formed by DNA-disengaged RuvB subunits stimulates ATP hydrolysis and nucleotide exchange. Immobilization of the converter enables RuvB to convert the ATP-contained energy into a lever motion, pulling 2 nucleotides of DNA out of the RuvA tetramer per ATP hydrolyzed, thus driving DNA branch migration. The RuvB motors rotate together with the DNA substrate, which together with the progressing nucleotide cycle form the mechanistic basis for DNA recombination by continuous HJ branch migration. Branch migration allows RuvC to scan DNA until it finds its consensus sequence, where it cleaves and resolves cruciform DNA. The chain is Holliday junction branch migration complex subunit RuvB from Rhizorhabdus wittichii (strain DSM 6014 / CCUG 31198 / JCM 15750 / NBRC 105917 / EY 4224 / RW1) (Sphingomonas wittichii).